Consider the following 1635-residue polypeptide: Cortactin-binding protein 2 (1635 aa).

4 disordered regions span residues 1–20 (MATAGGSGQPLCSGPPARTS), 193–219 (ASKLDAEKRKTGELEGALSAERQKSSQ), 264–469 (EQLR…DNLV), and 483–582 (SRFT…PHGI). Positions 116-273 (RKMQERMSAQ…EQLRKGNDHK (158 aa)) form a coiled coil. Composition is skewed to basic and acidic residues over residues 193 to 205 (ASKLDAEKRKTGE) and 264 to 274 (EQLRKGNDHKP). 2 stretches are compositionally biased toward low complexity: residues 320–331 (PPVAVPAKPSSA) and 375–395 (GPSSGSTPEPTGSALMPLLNN). Residues 402–414 (SQNHSLTSSTPNL) show a composition bias toward polar residues. Residues 439 to 453 (QGNANDQDQNGNTTQ) are compositionally biased toward low complexity. The segment covering 454 to 466 (SPPSREVSPTSRD) has biased composition (polar residues). Position 484 is an asymmetric dimethylarginine (arginine 484). 6 ANK repeats span residues 697–727 (GRPTRLHQAAAQGNVTLLSVLLNEEGLDINH), 731–760 (DGSSALYSAAKNGHTDCVRLLLNANAQVDD), 764–793 (NGFTPLCSAAAQGHVKCAELLIAYHADINH), 797–826 (GGQTPLYLACKNGNNECIKLLLEAGTDRSI), 830–859 (DGWTPVHAAVDSGNVDSLTLLMYYGGPESE), and 893–923 (EGWTAAHIAASKGLKNCLEILCGHGRLEAER). Positions 856 to 876 (PESENSGSKDQTGLGSREESR) are disordered. The segment covering 858-869 (SENSGSKDQTGL) has biased composition (polar residues). Residues 1420–1469 (SHRKKGESGSWRKVNTSPRKKSGLSSSQTWTKQEATKDGVRNDTGHQNGN) form a disordered region. Residues 1432-1452 (KVNTSPRKKSGLSSSQTWTKQ) show a composition bias toward polar residues. The span at 1453 to 1463 (EATKDGVRNDT) shows a compositional bias: basic and acidic residues. Residue serine 1498 is modified to Phosphoserine. A disordered region spans residues 1531 to 1624 (RMFGSSRTDP…RQREINNNLK (94 aa)). Composition is skewed to polar residues over residues 1546–1555 (PTMSDRSLPS) and 1563–1577 (LSSNPTLECSNNTPK). The segment covering 1615 to 1624 (RQREINNNLK) has biased composition (basic and acidic residues).

In terms of assembly, interacts with CTTN/cortactin SH3 domain. Interacts with STRN, STRN4/zinedin and MOB4/phocein; this interactions mediate the association with the STRIPAK core complex and may regulate dendritic spine distribution of the STRIPAK complex in hippocampal neurons. Activation of glutamate receptors weakens the interaction with STRN and STRN4.

The protein resides in the cytoplasm. It is found in the cell cortex. It localises to the cell projection. Its subcellular location is the dendritic spine. In terms of biological role, regulates the dendritic spine distribution of CTTN/cortactin in hippocampal neurons, and thus controls dendritic spinogenesis and dendritic spine maintenance. Associates with the striatin-interacting phosphatase and kinase (STRIPAK) core complex to regulate dendritic spine distribution of the STRIPAK complex in hippocampal neurons. This Ornithorhynchus anatinus (Duckbill platypus) protein is Cortactin-binding protein 2 (CTTNBP2).